The primary structure comprises 574 residues: Aspartate--tRNA ligase (574 aa).

E172 serves as a coordination point for L-aspartate. Residues 196–199 (QIFK) are aspartate. R218 contacts L-aspartate. Residues 218–220 (RDE) and Q227 contribute to the ATP site. Residue H453 participates in L-aspartate binding. ATP is bound at residue E487. Residue R494 coordinates L-aspartate. ATP is bound at residue 539–542 (GLDR).

Belongs to the class-II aminoacyl-tRNA synthetase family. Type 1 subfamily. In terms of assembly, homodimer.

Its subcellular location is the cytoplasm. The catalysed reaction is tRNA(Asp) + L-aspartate + ATP = L-aspartyl-tRNA(Asp) + AMP + diphosphate. Its function is as follows. Catalyzes the attachment of L-aspartate to tRNA(Asp) in a two-step reaction: L-aspartate is first activated by ATP to form Asp-AMP and then transferred to the acceptor end of tRNA(Asp). The sequence is that of Aspartate--tRNA ligase from Blochmanniella pennsylvanica (strain BPEN).